Consider the following 567-residue polypeptide: Urease subunit alpha (567 aa).

A Urease domain is found at 128–567 (GGIDAHVHFI…LPMSQRYFLF (440 aa)). Residues H133, H135, and K216 each coordinate Ni(2+). N6-carboxylysine is present on K216. Position 218 (H218) interacts with substrate. The Ni(2+) site is built by H245 and H271. H319 acts as the Proton donor in catalysis. A Ni(2+)-binding site is contributed by D359.

This sequence belongs to the metallo-dependent hydrolases superfamily. Urease alpha subunit family. Heterotrimer of UreA (gamma), UreB (beta) and UreC (alpha) subunits. Three heterotrimers associate to form the active enzyme. It depends on Ni cation as a cofactor. Post-translationally, carboxylation allows a single lysine to coordinate two nickel ions.

The protein localises to the cytoplasm. It carries out the reaction urea + 2 H2O + H(+) = hydrogencarbonate + 2 NH4(+). It participates in nitrogen metabolism; urea degradation; CO(2) and NH(3) from urea (urease route): step 1/1. This Blochmanniella pennsylvanica (strain BPEN) protein is Urease subunit alpha.